The following is a 177-amino-acid chain: Nucleoside triphosphate/diphosphate phosphatase (177 aa).

The Proton donor role is filled by R23. Mg(2+) contacts are provided by N87, D103, D105, D107, D120, and E123.

The protein belongs to the Ntdp family. Requires Mg(2+) as cofactor.

It carries out the reaction a ribonucleoside 5'-triphosphate + H2O = a ribonucleoside 5'-diphosphate + phosphate + H(+). It catalyses the reaction a ribonucleoside 5'-diphosphate + H2O = a ribonucleoside 5'-phosphate + phosphate + H(+). Its function is as follows. Has nucleoside phosphatase activity towards nucleoside triphosphates and nucleoside diphosphates. This is Nucleoside triphosphate/diphosphate phosphatase from Streptococcus pyogenes serotype M1.